The primary structure comprises 221 residues: Jacalin-related lectin 47 (221 aa).

Jacalin-type lectin domains are found at residues 1–64 (MDSN…YYYP) and 71–217 (SEKL…HVLP).

This sequence belongs to the jacalin lectin family.

The protein is Jacalin-related lectin 47 (JAL47) of Arabidopsis thaliana (Mouse-ear cress).